The chain runs to 91 residues: Cell division topological specificity factor (91 aa).

Belongs to the MinE family.

Its function is as follows. Prevents the cell division inhibition by proteins MinC and MinD at internal division sites while permitting inhibition at polar sites. This ensures cell division at the proper site by restricting the formation of a division septum at the midpoint of the long axis of the cell. This chain is Cell division topological specificity factor, found in Caldanaerobacter subterraneus subsp. tengcongensis (strain DSM 15242 / JCM 11007 / NBRC 100824 / MB4) (Thermoanaerobacter tengcongensis).